The following is a 243-amino-acid chain: Probable transcriptional regulator ycf27 (243 aa).

The Response regulatory domain maps to 7 to 120 (KILVVDDEAS…ELEARIRSVL (114 aa)). The residue at position 56 (D56) is a 4-aspartylphosphate. The H-T-H motif DNA-binding region spans 76 to 94 (DVPIIMLTALGEVCDRITG). The segment at residues 135–236 (SGIISIGFLK…ARGTGYLFQR (102 aa)) is a DNA-binding region (ompR/PhoB-type).

It localises to the plastid. The protein resides in the chloroplast. In terms of biological role, probable promoter-specific protein mediating the interaction between DNA and RNA polymerase. The chain is Probable transcriptional regulator ycf27 (ycf27) from Pyropia yezoensis (Susabi-nori).